A 211-amino-acid polypeptide reads, in one-letter code: Small ribosomal subunit protein uS3 (211 aa).

One can recognise a KH type-2 domain in the interval 38–106 (LRKFIKKAFY…NIELNIIEVK (69 aa)).

Belongs to the universal ribosomal protein uS3 family. Part of the 30S ribosomal subunit. Forms a tight complex with proteins S10 and S14.

Binds the lower part of the 30S subunit head. Binds mRNA in the 70S ribosome, positioning it for translation. The protein is Small ribosomal subunit protein uS3 of Ehrlichia chaffeensis (strain ATCC CRL-10679 / Arkansas).